Consider the following 492-residue polypeptide: MTETVTDQGKQRSSKLQKNEAAKDEQVEGKGKETLESGTDKSAEQNSSLLVGQPDVIDNDNVQTVDDFKNLMYKMQETRRAIVFALLNEKDLTKDDVEILKRAYEKLTDNQTHSFQREMCTLTTKLSVNIGDETRGLEKDLKYLDALMNIRREEPNLLWPIIMSRVDLFSILANYHPKGKETFLKEYEDTVKFLKTFISSEAITGKKPIFITDWDGTMKDYCSQYATNLQPVYSAVGMTRFAASFTRISAVLTAGPLRGPGILDLTAMPIDGPVMFSGSWGREWWLSGKRVVHQDGITDEGFNALQRLDDEMKDLLHTSDYAPFALVGSGVQRKVDRLTLGVQTVCHHVTSELSNRYQMAVKERMHRVDPNSQILVFDPSTELEVEVVAHNSGIIWNKGNGVERLIKSLGDSLQSPGKILICGDTLSDIPMVRQAVKQNPDGVLAIFVGAKMSLREEVKQVIGDESRCCFVSCPDVIHAAMSQILNEHCIGK.

Positions 1–55 (MTETVTDQGKQRSSKLQKNEAAKDEQVEGKGKETLESGTDKSAEQNSSLLVGQPD) are disordered. The segment covering 17–43 (QKNEAAKDEQVEGKGKETLESGTDKSA) has biased composition (basic and acidic residues). Positions 213 and 215 each coordinate Mg(2+). Asp-215 serves as the catalytic Proton donor/acceptor. Substrate is bound at residue 332–334 (QRK). Asp-424 provides a ligand contact to Mg(2+).

It belongs to the gob-1 trehalose phosphatase family. The cofactor is Mg(2+).

The enzyme catalyses alpha,alpha-trehalose 6-phosphate + H2O = alpha,alpha-trehalose + phosphate. Its activity is regulated as follows. Inhibited by trehalose 6-sulfate. Functionally, catalyzes the hydrolysis of trehalose 6-phosphate to trehalose and phosphate; prevents the accumulation of toxic levels of trehalose 6-phosphate. This chain is Trehalose-phosphatase, found in Brugia malayi (Filarial nematode worm).